The following is a 379-amino-acid chain: Cytochrome b (379 aa).

The next 4 membrane-spanning stretches (helical) occupy residues 33 to 53 (FGSL…FLAM), 77 to 98 (WLIR…FIHV), 113 to 133 (WNIG…GYVL), and 178 to 198 (FFAF…VHLL). Residues H83 and H97 each coordinate heme b. Residues H182 and H196 each contribute to the heme b site. H201 contacts a ubiquinone. Helical transmembrane passes span 226–246 (IKDL…ALFF), 288–308 (LGGV…PLLN), 320–340 (VTQT…WIGG), and 347–367 (FTTI…ILIP).

This sequence belongs to the cytochrome b family. As to quaternary structure, the cytochrome bc1 complex contains 11 subunits: 3 respiratory subunits (MT-CYB, CYC1 and UQCRFS1), 2 core proteins (UQCRC1 and UQCRC2) and 6 low-molecular weight proteins (UQCRH/QCR6, UQCRB/QCR7, UQCRQ/QCR8, UQCR10/QCR9, UQCR11/QCR10 and a cleavage product of UQCRFS1). This cytochrome bc1 complex then forms a dimer. The cofactor is heme b.

The protein localises to the mitochondrion inner membrane. In terms of biological role, component of the ubiquinol-cytochrome c reductase complex (complex III or cytochrome b-c1 complex) that is part of the mitochondrial respiratory chain. The b-c1 complex mediates electron transfer from ubiquinol to cytochrome c. Contributes to the generation of a proton gradient across the mitochondrial membrane that is then used for ATP synthesis. In Akodon lindberghi (Lindbergh's grass mouse), this protein is Cytochrome b (MT-CYB).